A 465-amino-acid chain; its full sequence is Phospholipase A1-II 5 (465 aa).

The active-site Acyl-ester intermediate is the S233. Active-site charge relay system residues include S233, D297, and H336.

It belongs to the AB hydrolase superfamily. Lipase family.

Its subcellular location is the cytoplasm. Acylhydrolase that catalyzes the hydrolysis of phospholipids at the sn-1 position. This chain is Phospholipase A1-II 5, found in Oryza sativa subsp. indica (Rice).